A 118-amino-acid chain; its full sequence is Thioredoxin H5 (118 aa).

Alanine 2 bears the N-acetylalanine mark. The 112-residue stretch at 2–113 folds into the Thioredoxin domain; sequence AGEGEVIACH…INEKLMKHGG (112 aa). Residues cysteine 39 and cysteine 42 each act as nucleophile in the active site. Cysteine 39 and cysteine 42 are disulfide-bonded.

It belongs to the thioredoxin family. Plant H-type subfamily. As to quaternary structure, interacts with MDH1.

Its subcellular location is the cytoplasm. In terms of biological role, thiol-disulfide oxidoreductase involved in response to pathogens and oxidative stresses. Required for the response to victorin, a phytotoxin which induces programmed cell death in sensitive plants. Possesses insulin disulfide bonds reducing activity. In Arabidopsis thaliana (Mouse-ear cress), this protein is Thioredoxin H5 (TRX5).